Reading from the N-terminus, the 264-residue chain is Thymidylate synthase (264 aa).

Arg21 serves as a coordination point for dUMP. Residue His51 participates in (6R)-5,10-methylene-5,6,7,8-tetrahydrofolate binding. 126 to 127 (RR) contacts dUMP. Residue Cys146 is the Nucleophile of the active site. DUMP contacts are provided by residues 166–169 (RSAD), Asn177, and 207–209 (HIY). Residue Asp169 participates in (6R)-5,10-methylene-5,6,7,8-tetrahydrofolate binding. Ala263 is a (6R)-5,10-methylene-5,6,7,8-tetrahydrofolate binding site.

This sequence belongs to the thymidylate synthase family. Bacterial-type ThyA subfamily. In terms of assembly, homodimer.

The protein resides in the cytoplasm. The catalysed reaction is dUMP + (6R)-5,10-methylene-5,6,7,8-tetrahydrofolate = 7,8-dihydrofolate + dTMP. It participates in pyrimidine metabolism; dTTP biosynthesis. Its function is as follows. Catalyzes the reductive methylation of 2'-deoxyuridine-5'-monophosphate (dUMP) to 2'-deoxythymidine-5'-monophosphate (dTMP) while utilizing 5,10-methylenetetrahydrofolate (mTHF) as the methyl donor and reductant in the reaction, yielding dihydrofolate (DHF) as a by-product. This enzymatic reaction provides an intracellular de novo source of dTMP, an essential precursor for DNA biosynthesis. The sequence is that of Thymidylate synthase from Methylobacillus flagellatus (strain ATCC 51484 / DSM 6875 / VKM B-1610 / KT).